The chain runs to 232 residues: MAKKGKKLQDAAKLIDRNSLYSAQEAIELAQKTSTVNFDATVEVAFRLGIDTRKNDQQIRGAVVLPNGTGKTQRVLVFAKGEKLKEAEAAGADYVGDAEYIQKIQQGWFDFDVIVATPDMMGEVGKLGRVLGPKGLMPNPKTGTVTFDVTKAIEEIKAGKVEYRADKAGIIHAPIGKVSFSAAKLVENFLAVFDVVQKAKPAAAKGTYMKSVNITTTMGPAVKIDAANVVVK.

Belongs to the universal ribosomal protein uL1 family. In terms of assembly, part of the 50S ribosomal subunit.

Functionally, binds directly to 23S rRNA. The L1 stalk is quite mobile in the ribosome, and is involved in E site tRNA release. Its function is as follows. Protein L1 is also a translational repressor protein, it controls the translation of the L11 operon by binding to its mRNA. This is Large ribosomal subunit protein uL1 from Lysinibacillus sphaericus (strain C3-41).